Consider the following 288-residue polypeptide: Bifunctional protein FolD 2 (288 aa).

Residues 166–168 (GRS) and S191 contribute to the NADP(+) site.

Belongs to the tetrahydrofolate dehydrogenase/cyclohydrolase family. In terms of assembly, homodimer.

It catalyses the reaction (6R)-5,10-methylene-5,6,7,8-tetrahydrofolate + NADP(+) = (6R)-5,10-methenyltetrahydrofolate + NADPH. The enzyme catalyses (6R)-5,10-methenyltetrahydrofolate + H2O = (6R)-10-formyltetrahydrofolate + H(+). It participates in one-carbon metabolism; tetrahydrofolate interconversion. Its function is as follows. Catalyzes the oxidation of 5,10-methylenetetrahydrofolate to 5,10-methenyltetrahydrofolate and then the hydrolysis of 5,10-methenyltetrahydrofolate to 10-formyltetrahydrofolate. The sequence is that of Bifunctional protein FolD 2 from Frankia alni (strain DSM 45986 / CECT 9034 / ACN14a).